The chain runs to 290 residues: MQQIHRLERKLLRATAEAIRDFDLVSQGDRIMVAVSGGKDSYTLLHLLMRLRERAPIDFDLVAVNLDQGQPGFPAHVVEDHLRSLGVPYRMLQRDTYSVVRRLVPEGKTTCPVCSRLRRGVLYNAAVEMGCTKIALGHHRDDLVETLLLSALYSGALKSMPPKLRSRDGRNVVIRPLCYAAEEDVAAFAEAMRFPIVPCDLCGSQPNLRRKRVKRLLAELSAEHPAVKGNLLHALGHVVPSHLLDRDLHRQLADATGRDPWLDAEDEEAEDCGEPAGDGVVSLGGARGGR.

Positions 36–41 (SGGKDS) match the PP-loop motif motif. Residues Cys111, Cys114, and Cys202 each coordinate [4Fe-4S] cluster. The interval 259-290 (DPWLDAEDEEAEDCGEPAGDGVVSLGGARGGR) is disordered. The span at 262–273 (LDAEDEEAEDCG) shows a compositional bias: acidic residues.

It belongs to the TtcA family. In terms of assembly, homodimer. Requires Mg(2+) as cofactor. [4Fe-4S] cluster is required as a cofactor.

It localises to the cytoplasm. The enzyme catalyses cytidine(32) in tRNA + S-sulfanyl-L-cysteinyl-[cysteine desulfurase] + AH2 + ATP = 2-thiocytidine(32) in tRNA + L-cysteinyl-[cysteine desulfurase] + A + AMP + diphosphate + H(+). Its pathway is tRNA modification. In terms of biological role, catalyzes the ATP-dependent 2-thiolation of cytidine in position 32 of tRNA, to form 2-thiocytidine (s(2)C32). The sulfur atoms are provided by the cysteine/cysteine desulfurase (IscS) system. The polypeptide is tRNA-cytidine(32) 2-sulfurtransferase (Anaeromyxobacter dehalogenans (strain 2CP-C)).